The chain runs to 338 residues: RAB6-interacting golgin (338 aa).

Basic and acidic residues-rich tracts occupy residues 1–14 (MTEK…DEIL) and 46–59 (RMPD…DQLR). Disordered stretches follow at residues 1-109 (MTEK…LNLD) and 127-188 (ARDK…SPFK). Low complexity-rich tracts occupy residues 60 to 73 (KQQQ…IQKP) and 153 to 167 (SGGD…DDGS). Residues 192–244 (LKDFEQHRRMIEEQNKQKKQMLYQAIEQHTQKTAAESRKIEEIRHELSKLESD) adopt a coiled-coil conformation. The tract at residues 244–260 (DLAVDVALLRKQIDNAC) is essential for Sas-6 binding. The interval 246-286 (AVDVALLRKQIDNACIHFANVEKQYVKIEAQFLRAKIELHN) is necessary for localization to the centrosome. The interval 246–323 (AVDVALLRKQ…TELMQKVGLS (78 aa)) is necessary for localization to the Golgi. Residues 260–286 (CIHFANVEKQYVKIEAQFLRAKIELHN) form a necessary for interaction with Sas-6 and essential for homodimerization region.

The protein belongs to the GORAB family. In terms of assembly, homodimer (via C-terminus); dimerization appears to be required for its trans-Golgi localization but not for its function and centriolar localization. Interacts (via C-terminus) with Rab6; binds Rab6 as a homodimer, this interaction seems to be required for trans-Golgi localization. Interacts (via C-terminus) with Sas-6; binds as a monomer to a Sas-6 homodimer.

It is found in the cytoplasm. The protein resides in the cytoskeleton. The protein localises to the microtubule organizing center. It localises to the centrosome. Its subcellular location is the centriole. It is found in the golgi apparatus. The protein resides in the trans-Golgi network. Required for centriole duplication likely through its interaction with Sas-6. During embryogenesis, maternally provided protein is required for centrosome duplication and nuclear division cycles of the syncytial embryos. In femoral chordotonal organs, required for sensory cilia structural integrity and functionality necessary for motor coordination. In male germline, has a role in cytokinesis which seems dependent on its localization to the Golgi. In Drosophila melanogaster (Fruit fly), this protein is RAB6-interacting golgin.